The primary structure comprises 333 residues: 5-formaminoimidazole-4-carboxamide-1-(beta)-D-ribofuranosyl 5'-monophosphate synthetase (333 aa).

The 5-amino-1-(5-phospho-beta-D-ribosyl)imidazole-4-carboxamide site is built by His-10 and Ser-74. Residues 95–324 (RNLFAWESNQ…ISREIRLALN (230 aa)) form the ATP-grasp domain. Residues 125–185 (VEDV…VPMY) and Glu-207 contribute to the ATP site. 5-amino-1-(5-phospho-beta-D-ribosyl)imidazole-4-carboxamide is bound at residue Asn-230. 2 residues coordinate Mg(2+): Glu-269 and Glu-282.

The protein belongs to the phosphohexose mutase family. Mg(2+) serves as cofactor. The cofactor is Mn(2+).

The enzyme catalyses 5-amino-1-(5-phospho-beta-D-ribosyl)imidazole-4-carboxamide + formate + ATP = 5-formamido-1-(5-phospho-D-ribosyl)imidazole-4-carboxamide + ADP + phosphate. It participates in purine metabolism; IMP biosynthesis via de novo pathway; 5-formamido-1-(5-phospho-D-ribosyl)imidazole-4-carboxamide from 5-amino-1-(5-phospho-D-ribosyl)imidazole-4-carboxamide (formate route): step 1/1. Catalyzes the ATP- and formate-dependent formylation of 5-aminoimidazole-4-carboxamide-1-beta-d-ribofuranosyl 5'-monophosphate (AICAR) to 5-formaminoimidazole-4-carboxamide-1-beta-d-ribofuranosyl 5'-monophosphate (FAICAR) in the absence of folates. The protein is 5-formaminoimidazole-4-carboxamide-1-(beta)-D-ribofuranosyl 5'-monophosphate synthetase of Sulfolobus acidocaldarius (strain ATCC 33909 / DSM 639 / JCM 8929 / NBRC 15157 / NCIMB 11770).